Reading from the N-terminus, the 134-residue chain is Large ribosomal subunit protein eL32 (134 aa).

It belongs to the eukaryotic ribosomal protein eL32 family.

This Drosophila melanogaster (Fruit fly) protein is Large ribosomal subunit protein eL32 (RpL32).